The primary structure comprises 165 residues: Large ribosomal subunit protein uL30 (165 aa).

The protein belongs to the universal ribosomal protein uL30 family. As to quaternary structure, part of the 50S ribosomal subunit.

In Thermoplasma volcanium (strain ATCC 51530 / DSM 4299 / JCM 9571 / NBRC 15438 / GSS1), this protein is Large ribosomal subunit protein uL30.